A 202-amino-acid chain; its full sequence is Snake venom metalloproteinase fibrolase (202 aa).

Residues 6 to 202 enclose the Peptidase M12B domain; the sequence is RYIELVIVAD…HNPQCILNQP (197 aa). Glutamate 9 provides a ligand contact to Ca(2+). Residue asparagine 25 is glycosylated (N-linked (GlcNAc...) asparagine). Residue aspartate 93 coordinates Ca(2+). 3 disulfides stabilise this stretch: cysteine 117/cysteine 197, cysteine 157/cysteine 181, and cysteine 159/cysteine 164. Histidine 142 lines the Zn(2+) pocket. Residue glutamate 143 is part of the active site. Histidine 146 and histidine 152 together coordinate Zn(2+). Ca(2+) contacts are provided by cysteine 197 and asparagine 200.

This sequence belongs to the venom metalloproteinase (M12B) family. P-I subfamily. As to quaternary structure, monomer. The cofactor is Zn(2+). Glycosylated. As to expression, expressed by the venom gland.

It localises to the secreted. It catalyses the reaction Hydrolysis of 14-Ala-|-Leu-15 in insulin B chain and 413-Lys-|-Leu-414 in alpha-chain of fibrinogen.. Its activity is regulated as follows. Activated by calcium and magnesium ions. Inhibited by EDTA, DTT and L-cysteine. Activity is not affected by PMSF or heparin. Functionally, has fibrino(geno)lytic activity on the alpha and beta chains of fibrinogen (FGA and FGB). Inhibits human ADP- and collagen-induced platelet aggregation on platelet-rich plasma but does not affect the thrombin-induced aggregation of rabbit washed platelets. Slightly degrades plasminogen. The chain is Snake venom metalloproteinase fibrolase from Macrovipera lebetinus (Levantine viper).